Here is a 75-residue protein sequence, read N- to C-terminus: MALAIGLCLGLGIPISLIIGAVIGYYFAGKYFKKQLKENPPITESQIRAMYQQMGRKPTEKQIKQIMATFKKNNK.

Residues 5-27 form a helical membrane-spanning segment; the sequence is IGLCLGLGIPISLIIGAVIGYYF.

Belongs to the UPF0154 family.

The protein resides in the membrane. This Malacoplasma penetrans (strain HF-2) (Mycoplasma penetrans) protein is UPF0154 protein MYPE400.